Here is a 251-residue protein sequence, read N- to C-terminus: uncharacterized protein (251 aa).

Residues methionine 1 to proline 22 form a disordered region.

This is an uncharacterized protein from Homo sapiens (Human).